A 315-amino-acid polypeptide reads, in one-letter code: Aspartate carbamoyltransferase catalytic subunit (315 aa).

Carbamoyl phosphate is bound by residues R64 and T65. K92 is an L-aspartate binding site. Carbamoyl phosphate-binding residues include R114, H142, and Q145. The L-aspartate site is built by R175 and R229. Carbamoyl phosphate is bound by residues G270 and P271.

It belongs to the aspartate/ornithine carbamoyltransferase superfamily. ATCase family. As to quaternary structure, heterododecamer (2C3:3R2) of six catalytic PyrB chains organized as two trimers (C3), and six regulatory PyrI chains organized as three dimers (R2).

It carries out the reaction carbamoyl phosphate + L-aspartate = N-carbamoyl-L-aspartate + phosphate + H(+). It participates in pyrimidine metabolism; UMP biosynthesis via de novo pathway; (S)-dihydroorotate from bicarbonate: step 2/3. Its function is as follows. Catalyzes the condensation of carbamoyl phosphate and aspartate to form carbamoyl aspartate and inorganic phosphate, the committed step in the de novo pyrimidine nucleotide biosynthesis pathway. This Xanthobacter autotrophicus (strain ATCC BAA-1158 / Py2) protein is Aspartate carbamoyltransferase catalytic subunit.